We begin with the raw amino-acid sequence, 534 residues long: Calmodulin calcium-dependent NAD kinase (534 aa).

The segment at Gln-167–Arg-196 is calmodulin-binding. ATP is bound at residue Gly-238–Ser-245.

Interacts with calmodulin (CaM) in a calcium Ca(2+)-dependent manner in vitro. The cofactor is Ca(2+).

It is found in the mitochondrion outer membrane. It carries out the reaction NAD(+) + ATP = ADP + NADP(+) + H(+). Its function is as follows. Phosphorylates NAD(+) to produce NADP(+) in a calmodulin calcium-dependent manner. Does not possess activity toward NADH. Has broad specificity for the phosphoryl donor, as ATP, CTP, GTP and UTP can be used interchangeably and produce similar efficiencies. May play a role in producing NADP(H) needed to regulate the elicitor-induced reactive oxygen species (ROS) burst by sustaining the activity of NADPH oxidases. Does not seem to play a role in photosynthesis-driven growth. This chain is Calmodulin calcium-dependent NAD kinase, found in Arabidopsis thaliana (Mouse-ear cress).